The sequence spans 159 residues: 2-C-methyl-D-erythritol 2,4-cyclodiphosphate synthase (159 aa).

Residues aspartate 10 and histidine 12 each contribute to the a divalent metal cation site. Residues 10 to 12 and 36 to 37 each bind 4-CDP-2-C-methyl-D-erythritol 2-phosphate; these read DVH and HS. Histidine 44 provides a ligand contact to a divalent metal cation. 4-CDP-2-C-methyl-D-erythritol 2-phosphate is bound by residues 58 to 60, 63 to 67, 102 to 108, 134 to 137, phenylalanine 141, and arginine 144; these read DIG, FPDTD, AQAPKMA, and TTTE.

It belongs to the IspF family. As to quaternary structure, homotrimer. It depends on a divalent metal cation as a cofactor.

It carries out the reaction 4-CDP-2-C-methyl-D-erythritol 2-phosphate = 2-C-methyl-D-erythritol 2,4-cyclic diphosphate + CMP. It functions in the pathway isoprenoid biosynthesis; isopentenyl diphosphate biosynthesis via DXP pathway; isopentenyl diphosphate from 1-deoxy-D-xylulose 5-phosphate: step 4/6. In terms of biological role, involved in the biosynthesis of isopentenyl diphosphate (IPP) and dimethylallyl diphosphate (DMAPP), two major building blocks of isoprenoid compounds. Catalyzes the conversion of 4-diphosphocytidyl-2-C-methyl-D-erythritol 2-phosphate (CDP-ME2P) to 2-C-methyl-D-erythritol 2,4-cyclodiphosphate (ME-CPP) with a corresponding release of cytidine 5-monophosphate (CMP). This Idiomarina loihiensis (strain ATCC BAA-735 / DSM 15497 / L2-TR) protein is 2-C-methyl-D-erythritol 2,4-cyclodiphosphate synthase.